We begin with the raw amino-acid sequence, 460 residues long: Inner membrane symporter YicJ (460 aa).

Residues Met1 to Lys11 lie on the Periplasmic side of the membrane. 2 helical membrane-spanning segments follow: residues Ile12–Met32 and Met33–Val53. Over Ala54–Arg80 the chain is Periplasmic. Residues Pro81–Pro101 traverse the membrane as a helical segment. Topologically, residues Asp102 to Tyr116 are cytoplasmic. A helical transmembrane segment spans residues Thr117 to Ile137. Over Thr138 to Phe152 the chain is Periplasmic. A helical membrane pass occupies residues Val153–Ile173. Residues Gly174 to Gly181 lie on the Cytoplasmic side of the membrane. Residues Phe182–Phe202 form a helical membrane-spanning segment. Residues Thr203 to Gly248 lie on the Periplasmic side of the membrane. The chain crosses the membrane as a helical span at residues Gly249–Leu269. Over Thr270–Asp288 the chain is Cytoplasmic. The chain crosses the membrane as a helical span at residues Trp289 to Ala309. Met310 is a topological domain (periplasmic). A helical transmembrane segment spans residues Phe311–Leu331. The Cytoplasmic segment spans residues His332–Thr366. Residues Leu367–Tyr387 form a helical membrane-spanning segment. Over Gly388–Ser403 the chain is Periplasmic. A helical transmembrane segment spans residues Ile404–Ala424. The Cytoplasmic segment spans residues Lys425–Asn460.

The protein belongs to the sodium:galactoside symporter (TC 2.A.2) family.

Its subcellular location is the cell inner membrane. The sequence is that of Inner membrane symporter YicJ (yicJ) from Escherichia coli (strain K12).